A 360-amino-acid polypeptide reads, in one-letter code: MEAGQQWPGKTDFYLQLPKVELHAHLNGSISSSTMKKLIAKKPHLNVHGHMTMIDKGKKRTLQECFQMFQVIHQLTTSAEDILMVTKDVIKEFADDGVKYLELRSTPREENATGMTRKTYVESVLEGIKQCKQENLDIDVRYLMAIDRRGGPTIARETVELAKEFFLSTENTVLGLDLSGDPTIGQANDFLEPLLEAKKAGLKLALHLAEIPNREKENQMLLSLLPDRIGHGTFLSASEAGALDQVDFVRQHQIPLELCLTSNIKSQTVPSYDQHHFGFWYSIAHPSVICTDDKGVFATYLSQEYQLAAETFNLTPFQVWDLSYESINYIFACDNTRSELRKRWTHLKQKVLNCNEVNYF.

Zn(2+)-binding residues include His23 and His25. Residues His25, Asn27, His73, 105–108 (STPR), Asp147, and Gly180 contribute to the N(6)-methyl-AMP site. Position 207 (His207) interacts with Zn(2+). N(6)-methyl-AMP contacts are provided by Glu210, Asp292, and Asp293. The active-site Proton donor is the Glu210. Asp292 serves as a coordination point for Zn(2+).

Belongs to the metallo-dependent hydrolases superfamily. Adenosine and AMP deaminases family. Monomer. Zn(2+) is required as a cofactor.

The catalysed reaction is N(6)-methyl-AMP + H2O + H(+) = IMP + methylamine. Its function is as follows. Catalyzes the hydrolysis of the free cytosolic methylated adenosine nucleotide N(6)-methyl-AMP (N6-mAMP) to produce inositol monophosphate (IMP) and methylamine. Is required for the catabolism of cytosolic N6-mAMP, which is derived from the degradation of mRNA containing N6-methylated adenine (m6A). The sequence is that of N6-Methyl-AMP deaminase (Mapda) from Mus musculus (Mouse).